Reading from the N-terminus, the 148-residue chain is 3-dehydroquinate dehydratase (148 aa).

The active-site Proton acceptor is the tyrosine 23. Residues asparagine 74, histidine 80, and aspartate 87 each coordinate substrate. Histidine 100 acts as the Proton donor in catalysis. Residues 101–102 (IS) and arginine 111 each bind substrate.

It belongs to the type-II 3-dehydroquinase family. Homododecamer.

It carries out the reaction 3-dehydroquinate = 3-dehydroshikimate + H2O. It functions in the pathway metabolic intermediate biosynthesis; chorismate biosynthesis; chorismate from D-erythrose 4-phosphate and phosphoenolpyruvate: step 3/7. Its function is as follows. Catalyzes a trans-dehydration via an enolate intermediate. This is 3-dehydroquinate dehydratase from Anoxybacillus flavithermus (strain DSM 21510 / WK1).